Here is a 353-residue protein sequence, read N- to C-terminus: Photosystem II protein D1 (353 aa).

T2 carries the post-translational modification N-acetylthreonine. T2 bears the Phosphothreonine mark. 3 helical membrane-spanning segments follow: residues 29–46 (YIGW…TATS), 118–133 (HFLL…EWEL), and 142–156 (WIAV…AATA). Residue H118 participates in chlorophyll a binding. Y126 provides a ligand contact to pheophytin a. D170 and E189 together coordinate [CaMn4O5] cluster. The chain crosses the membrane as a helical span at residues 197-218 (FHMLGVAGVFGGSLFSAMHGSL). A chlorophyll a-binding site is contributed by H198. A quinone is bound by residues H215 and 264–265 (SF). Position 215 (H215) interacts with Fe cation. H272 lines the Fe cation pocket. The chain crosses the membrane as a helical span at residues 274 to 288 (FLAAWPVVGIWFTAL). [CaMn4O5] cluster contacts are provided by H332, E333, D342, and A344. The propeptide occupies 345 to 353 (AVEVPSTNG).

It belongs to the reaction center PufL/M/PsbA/D family. As to quaternary structure, PSII is composed of 1 copy each of membrane proteins PsbA, PsbB, PsbC, PsbD, PsbE, PsbF, PsbH, PsbI, PsbJ, PsbK, PsbL, PsbM, PsbT, PsbX, PsbY, PsbZ, Psb30/Ycf12, at least 3 peripheral proteins of the oxygen-evolving complex and a large number of cofactors. It forms dimeric complexes. The cofactor is The D1/D2 heterodimer binds P680, chlorophylls that are the primary electron donor of PSII, and subsequent electron acceptors. It shares a non-heme iron and each subunit binds pheophytin, quinone, additional chlorophylls, carotenoids and lipids. D1 provides most of the ligands for the Mn4-Ca-O5 cluster of the oxygen-evolving complex (OEC). There is also a Cl(-1) ion associated with D1 and D2, which is required for oxygen evolution. The PSII complex binds additional chlorophylls, carotenoids and specific lipids.. In terms of processing, tyr-161 forms a radical intermediate that is referred to as redox-active TyrZ, YZ or Y-Z. C-terminally processed by CTPA; processing is essential to allow assembly of the oxygen-evolving complex and thus photosynthetic growth.

The protein localises to the plastid. The protein resides in the chloroplast thylakoid membrane. It catalyses the reaction 2 a plastoquinone + 4 hnu + 2 H2O = 2 a plastoquinol + O2. Functionally, photosystem II (PSII) is a light-driven water:plastoquinone oxidoreductase that uses light energy to abstract electrons from H(2)O, generating O(2) and a proton gradient subsequently used for ATP formation. It consists of a core antenna complex that captures photons, and an electron transfer chain that converts photonic excitation into a charge separation. The D1/D2 (PsbA/PsbD) reaction center heterodimer binds P680, the primary electron donor of PSII as well as several subsequent electron acceptors. The chain is Photosystem II protein D1 from Calycanthus floridus var. glaucus (Eastern sweetshrub).